A 131-amino-acid chain; its full sequence is AQLQNLVLKDREATPNDHTFVPRDIRDNVGEVVESTGVPIGESRFTISLRKTSNGRYKSTLKLVVPVVQSQTVNGIVTPVVVRTSYVTVDFDYDARSTTKERNNFVGMIADALKADLMLVHDTIVNLQGVY.

Residues Gln2 and Tyr131 each contribute to the Ca(2+) site.

It belongs to the Leviviricetes capsid protein family. In terms of assembly, homodimer. The capsid proteins form dimers that assemble by group of 5. Twelve such pentamers are linked together with free dimers. The homodimers binds to the viral RNA via an operator hairpin, but also to many other RNA sequences in the viral genome; this interaction probably shifts the virus from the replicative to the assembly phase and ensures specific encapsidation of the viral genome.

It localises to the virion. Functionally, capsid protein self-assembles to form an icosahedral capsid with a T=3 symmetry, about 26 nm in diameter, and consisting of 89 capsid proteins dimers (178 capsid proteins). Involved in viral genome encapsidation through the interaction between a capsid protein dimer and the multiple packaging signals present in the RNA genome. The capsid also contains 1 copy of the A2 maturation protein. Its function is as follows. Acts as a translational repressor of viral replicase synthesis late in infection. This latter function is the result of capsid protein interaction with an RNA hairpin which contains the replicase ribosome-binding site. The protein is Capsid protein of Pseudomonas phage PRR1 (Bacteriophage PRR1).